A 155-amino-acid polypeptide reads, in one-letter code: Nuclear cap-binding protein subunit 2 (155 aa).

Residues Tyr-19, Tyr-42, 111 to 115, 122 to 126, and 132 to 133 contribute to the mRNA site; these read RTDWD, RQYGR, and QV. The region spanning 39–117 is the RRM domain; the sequence is NTLYVGNLSF…RIIRTDWDAG (79 aa). Residues 122–155 form a disordered region; it reads RQYGRGKSGGQVRDEYRQDYDPARGGYGKVVARP. Positions 133–143 are enriched in basic and acidic residues; sequence VRDEYRQDYDP.

This sequence belongs to the RRM NCBP2 family. In terms of assembly, component of the nuclear cap-binding complex (CBC), a heterodimer composed of ncbp1/cbp80 and ncbp2/cbp20 that interacts with m7GpppG-capped RNA.

It is found in the nucleus. The protein localises to the cytoplasm. In terms of biological role, component of the cap-binding complex (CBC), which binds co-transcriptionally to the 5' cap of pre-mRNAs and is involved in various processes such as pre-mRNA splicing, translation regulation, nonsense-mediated mRNA decay, RNA-mediated gene silencing (RNAi) by microRNAs (miRNAs) and mRNA export. The CBC complex is involved in mRNA export from the nucleus, leading to the recruitment of the mRNA export machinery to the 5' end of mRNA and to mRNA export in a 5' to 3' direction through the nuclear pore. The CBC complex is also involved in mediating U snRNA and intronless mRNAs export from the nucleus. The CBC complex is essential for a pioneer round of mRNA translation, before steady state translation when the CBC complex is replaced by cytoplasmic cap-binding protein eIF4E. The pioneer round of mRNA translation mediated by the CBC complex plays a central role in nonsense-mediated mRNA decay (NMD), NMD only taking place in mRNAs bound to the CBC complex, but not on eIF4E-bound mRNAs. The CBC complex enhances NMD in mRNAs containing at least one exon-junction complex (EJC), promoting the interaction between upf1 and upf2. The CBC complex is also involved in 'failsafe' NMD, which is independent of the EJC complex, while it does not participate in Staufen-mediated mRNA decay (SMD). During cell proliferation, the CBC complex is also involved in microRNAs (miRNAs) biogenesis via its interaction with srrt/ars2, thereby being required for miRNA-mediated RNA interference. The CBC complex also acts as a negative regulator of parn, thereby acting as an inhibitor of mRNA deadenylation. In the CBC complex, ncbp2/cbp20 recognizes and binds capped RNAs (m7GpppG-capped RNA) but requires ncbp1/cbp80 to stabilize the movement of its N-terminal loop and lock the CBC into a high affinity cap-binding state with the cap structure. The conventional cap-binding complex with NCBP2 binds both small nuclear RNA (snRNA) and messenger (mRNA) and is involved in their export from the nucleus. The polypeptide is Nuclear cap-binding protein subunit 2 (ncbp2) (Esox lucius (Northern pike)).